The following is a 275-amino-acid chain: Arylalkylamine N-acetyltransferase 1 (275 aa).

Residues 181 to 183 and 189 to 193 each bind acetyl-CoA; these read LSV and GLGIA. In terms of domain architecture, N-acetyltransferase spans 181 to 254; that stretch reads LSVDTNYRGL…GEVVFKPAAP (74 aa).

The protein belongs to the acetyltransferase family. AANAT subfamily. In the adult, expressed in the midgut portion of the thoracic segments and the frontal half of the abdomen (at protein level). Expressed in the epithelial cell layer facing the lumen of the gut (at protein level). In the brain, expressed in a sub-populations of neurons and astrocytes, and in a set of distinct stripes in the optic lobes (at protein level). Expressed mainly in serotonergic neurons but also in subsets of glutamatergic, GABAergic and cholinergic neurons (at protein level).

The protein localises to the cytoplasm. Its subcellular location is the nucleus. It catalyses the reaction a 2-arylethylamine + acetyl-CoA = an N-acetyl-2-arylethylamine + CoA + H(+). It carries out the reaction serotonin + acetyl-CoA = N-acetylserotonin + CoA + H(+). The catalysed reaction is dopamine + acetyl-CoA = N-acetyldopamine + CoA + H(+). The enzyme catalyses tyramine + acetyl-CoA = N-acetyltyramine + CoA + H(+). It catalyses the reaction octopamine + acetyl-CoA = N-acetyloctopamine + CoA + H(+). It carries out the reaction 5-methoxytryptamine + acetyl-CoA = melatonin + CoA + H(+). The catalysed reaction is 2-phenylethylamine + acetyl-CoA = N-(2-phenylethyl)acetamide + CoA + H(+). The enzyme catalyses noradrenaline + acetyl-CoA = N-acetylnoradrenaline + CoA + H(+). It catalyses the reaction tyramine + butanoyl-CoA = N-butanoyltyramine + CoA + H(+). It carries out the reaction tyramine + hexanoyl-CoA = N-hexanoyltyramine + CoA + H(+). The catalysed reaction is tryptamine + acetyl-CoA = N-acetyltryptamine + CoA + H(+). The enzyme catalyses dopamine + hexadecanoyl-CoA = N-hexadecanoyl-dopamine + CoA + H(+). It catalyses the reaction dopamine + (9Z)-octadecenoyl-CoA = N-(9Z-octadecanoyl)-dopamine + CoA + H(+). It carries out the reaction serotonin + hexadecanoyl-CoA = N-hexadecanoyl-serotonin + CoA + H(+). The catalysed reaction is serotonin + (9Z)-octadecenoyl-CoA = N-(9Z-octadecenoyl)-serotonin + CoA + H(+). The enzyme catalyses serotonin + octadecanoyl-CoA = N-octadecanoyl-serotonin + CoA + H(+). It catalyses the reaction serotonin + (5Z,8Z,11Z,14Z)-eicosatetraenoyl-CoA = N-[(5Z,8Z,11Z,14Z)-eicosatetraenoyl]-serotonin + CoA + H(+). Its pathway is aromatic compound metabolism; melatonin biosynthesis; melatonin from serotonin: step 1/2. With respect to regulation, inhibited by long-chain acyl-CoA thioesters, oleoyl-CoA (an analog of acetyl-CoA) and tyrosol (an analog of tyramine). Functionally, catalyzes N-acetylation of tryptamine, tyramine, dopamine, serotonin and octopamine. In astrocytes, regulates sleep homeostasis by limiting the accumulation of serotonin and dopamine in the brain upon sleep deprivation. Is not essential for sclerotization. This is Arylalkylamine N-acetyltransferase 1 from Drosophila melanogaster (Fruit fly).